The following is a 547-amino-acid chain: Heme-binding protein A (547 aa).

A signal peptide spans 1 to 18 (MKLKATLTLAAATLVLAA). Cys19 is lipidated: N-palmitoyl cysteine. Cys19 is lipidated: S-diacylglycerol cysteine.

It belongs to the bacterial solute-binding protein 5 family.

The protein localises to the cell inner membrane. Important role in heme acquisition or metabolism. The polypeptide is Heme-binding protein A (hbpA) (Haemophilus influenzae (strain ATCC 51907 / DSM 11121 / KW20 / Rd)).